The chain runs to 445 residues: Oxysterols receptor LXR-alpha (445 aa).

2 disordered regions span residues methionine 1–asparagine 34 and threonine 62–proline 86. A transactivation AF-1; required for ligand-independent transactivation function region spans residues methionine 1 to glutamate 94. Residues asparagine 93 to serine 168 constitute a DNA-binding region (nuclear receptor). NR C4-type zinc fingers lie at residues cysteine 96–cysteine 116 and cysteine 132–cysteine 156. A disordered region spans residues lysine 178–valine 200. A compositionally biased stretch (low complexity) spans serine 189–valine 200. The residue at position 191 (serine 191) is a Phosphoserine. A transactivation AF-2; required for ligand-dependent transactivation function; mediates interaction with CCAR2 region spans residues glutamine 203 to glutamate 445. In terms of domain architecture, NR LBD spans glutamate 207–glutamate 445.

The protein belongs to the nuclear hormone receptor family. NR1 subfamily. In terms of assembly, heterodimer of NR1H3 and RXR (retinoic acid receptor). Interacts with CCAR2 (via N-terminus) in a ligand-independent manner. Interacts with SIRT1 and this interaction is inhibited by CCAR2. Post-translationally, ubiquitinated by UBR5, leading to its degradation: UBR5 specifically recognizes and binds ligand-bound NR1H3 when it is not associated with coactivators (NCOAs). In presence of NCOAs, the UBR5-degron is not accessible, preventing its ubiquitination and degradation. In adults it is expressed in spleen, pituitary, lung, liver, and fat. Weaker expression is observed in several other tissues.

The protein localises to the nucleus. It localises to the cytoplasm. In terms of biological role, nuclear receptor that exhibits a ligand-dependent transcriptional activation activity. Interaction with retinoic acid receptor (RXR) shifts RXR from its role as a silent DNA-binding partner to an active ligand-binding subunit in mediating retinoid responses through target genes defined by LXRES. LXRES are DR4-type response elements characterized by direct repeats of two similar hexanuclotide half-sites spaced by four nucleotides. Plays an important role in the regulation of cholesterol homeostasis, regulating cholesterol uptake through MYLIP-dependent ubiquitination of LDLR, VLDLR and LRP8. Interplays functionally with RORA for the regulation of genes involved in liver metabolism. Induces LPCAT3-dependent phospholipid remodeling in endoplasmic reticulum (ER) membranes of hepatocytes, driving SREBF1 processing and lipogenesis. Via LPCAT3, triggers the incorporation of arachidonate into phosphatidylcholines of ER membranes, increasing membrane dynamics and enabling triacylglycerols transfer to nascent very low-density lipoprotein (VLDL) particles. Via LPCAT3 also counteracts lipid-induced ER stress response and inflammation, likely by modulating SRC kinase membrane compartmentalization and limiting the synthesis of lipid inflammatory mediators. The polypeptide is Oxysterols receptor LXR-alpha (Nr1h3) (Rattus norvegicus (Rat)).